The primary structure comprises 60 residues: uncharacterized protein (60 aa).

This is an uncharacterized protein from Dictyostelium discoideum (Social amoeba).